The chain runs to 481 residues: Subtilisin-like protease 1 (481 aa).

An N-terminal signal peptide occupies residues 1–19 (MGVFRFISISLAAVSAANA). Positions 20–116 (AQILSMPHAQ…VEPDTIISVH (97 aa)) are excised as a propeptide. In terms of domain architecture, Inhibitor I9 spans 34-115 (SYIVMMKDDT…FVEPDTIISV (82 aa)). Positions 126-400 (SWGLARISSS…NVLINNGGAK (275 aa)) constitute a Peptidase S8 domain. Residues Asp158 and His190 each act as charge relay system in the active site. The interval 175 to 198 (GSNQVNDGDDNDRSGHGTHTSGTM) is disordered. An N-linked (GlcNAc...) asparagine glycan is attached at Asn251. The disordered stretch occupies residues 281–312 (GNDNTDARSSSPASEPSVCTVGASAEDDSRSS). Polar residues predominate over residues 282 to 294 (NDNTDARSSSPAS). Catalysis depends on Ser345, which acts as the Charge relay system. The disordered stretch occupies residues 379–455 (ASISDVGPGT…HPHTPFPGGD (77 aa)). A compositionally biased stretch (pro residues) spans 424 to 450 (PQQPAPGEPSTPAPAPMPPTPQHPHTP).

Belongs to the peptidase S8 family.

Its subcellular location is the secreted. In terms of biological role, secreted subtilisin-like serine protease with keratinolytic activity that contributes to pathogenicity. The chain is Subtilisin-like protease 1 (SUB1) from Arthroderma gypseum (strain ATCC MYA-4604 / CBS 118893) (Microsporum gypseum).